A 198-amino-acid polypeptide reads, in one-letter code: Large ribosomal subunit protein uL13 (198 aa).

The protein belongs to the universal ribosomal protein uL13 family.

The chain is Large ribosomal subunit protein uL13 (RPL13A) from Tetrahymena thermophila (strain SB210).